The sequence spans 90 residues: Co-chaperonin GroES (90 aa).

Belongs to the GroES chaperonin family. As to quaternary structure, heptamer of 7 subunits arranged in a ring. Interacts with the chaperonin GroEL.

It is found in the cytoplasm. Together with the chaperonin GroEL, plays an essential role in assisting protein folding. The GroEL-GroES system forms a nano-cage that allows encapsulation of the non-native substrate proteins and provides a physical environment optimized to promote and accelerate protein folding. GroES binds to the apical surface of the GroEL ring, thereby capping the opening of the GroEL channel. This chain is Co-chaperonin GroES, found in Fusobacterium nucleatum subsp. nucleatum (strain ATCC 25586 / DSM 15643 / BCRC 10681 / CIP 101130 / JCM 8532 / KCTC 2640 / LMG 13131 / VPI 4355).